Consider the following 293-residue polypeptide: UDP-3-O-acyl-N-acetylglucosamine deacetylase (293 aa).

Positions 79, 236, and 240 each coordinate Zn(2+). His-263 (proton donor) is an active-site residue.

This sequence belongs to the LpxC family. Requires Zn(2+) as cofactor.

The enzyme catalyses a UDP-3-O-[(3R)-3-hydroxyacyl]-N-acetyl-alpha-D-glucosamine + H2O = a UDP-3-O-[(3R)-3-hydroxyacyl]-alpha-D-glucosamine + acetate. The protein operates within glycolipid biosynthesis; lipid IV(A) biosynthesis; lipid IV(A) from (3R)-3-hydroxytetradecanoyl-[acyl-carrier-protein] and UDP-N-acetyl-alpha-D-glucosamine: step 2/6. In terms of biological role, catalyzes the hydrolysis of UDP-3-O-myristoyl-N-acetylglucosamine to form UDP-3-O-myristoylglucosamine and acetate, the committed step in lipid A biosynthesis. The polypeptide is UDP-3-O-acyl-N-acetylglucosamine deacetylase (Phenylobacterium zucineum (strain HLK1)).